Consider the following 314-residue polypeptide: Acetyl-coenzyme A carboxylase carboxyl transferase subunit beta (314 aa).

In terms of domain architecture, CoA carboxyltransferase N-terminal spans 44 to 311 (LMNKCPHCGT…VETWQASSPL (268 aa)). Positions 48, 51, 67, and 70 each coordinate Zn(2+). The C4-type zinc finger occupies 48–70 (CPHCGTIHYSKDLEKNLRVCKGC).

Belongs to the AccD/PCCB family. In terms of assembly, acetyl-CoA carboxylase is a heterohexamer composed of biotin carboxyl carrier protein (AccB), biotin carboxylase (AccC) and two subunits each of ACCase subunit alpha (AccA) and ACCase subunit beta (AccD). It depends on Zn(2+) as a cofactor.

The protein resides in the cytoplasm. The enzyme catalyses N(6)-carboxybiotinyl-L-lysyl-[protein] + acetyl-CoA = N(6)-biotinyl-L-lysyl-[protein] + malonyl-CoA. It participates in lipid metabolism; malonyl-CoA biosynthesis; malonyl-CoA from acetyl-CoA: step 1/1. Component of the acetyl coenzyme A carboxylase (ACC) complex. Biotin carboxylase (BC) catalyzes the carboxylation of biotin on its carrier protein (BCCP) and then the CO(2) group is transferred by the transcarboxylase to acetyl-CoA to form malonyl-CoA. This is Acetyl-coenzyme A carboxylase carboxyl transferase subunit beta from Brevibacillus brevis (strain 47 / JCM 6285 / NBRC 100599).